The chain runs to 146 residues: Protein MGF 100-3L (146 aa).

The protein belongs to the asfivirus MGF 100 family.

In terms of biological role, plays a role in virus cell tropism, and may be required for efficient virus replication in macrophages. In Ornithodoros (relapsing fever ticks), this protein is Protein MGF 100-3L.